We begin with the raw amino-acid sequence, 244 residues long: MASEGKVLLVASSYYGPFYPDGMNTGVHFAELLIPYQVFREAGYEVQLTSETGKCKFDDHSIKKSALGEVERDAFDNKDNEFWYALKDIKPADKINYKEFCIMFIAGGHAAMFDLPHATNLQTLAQQIYASNGVLAAVCHGPVMLPFVDDTKSPEGRSVVYGKKVTAFNSTGELVMGVSSALRERNMQDLNSLFREAGAEFVDPPTPMSDFTQVDGRIVTGVNPMSAKSTAEAAIKVSQSLRKT.

Catalysis depends on residues Cys-139, His-140, and Glu-173.

It belongs to the peptidase C56 family. HSP31-like subfamily.

The protein resides in the cytoplasm. It is found in the nucleus. It catalyses the reaction methylglyoxal + H2O = (R)-lactate + H(+). Its function is as follows. Catalyzes the conversion of methylglyoxal (MG) to D-lactate in a single glutathione (GSH)-independent step. May play a role in detoxifying endogenously produced glyoxals. Involved in protection against reactive oxygen species (ROS). The sequence is that of Glutathione-independent glyoxalase hsp3101 from Schizosaccharomyces pombe (strain 972 / ATCC 24843) (Fission yeast).